Here is a 279-residue protein sequence, read N- to C-terminus: Serine protease 29 (279 aa).

The N-terminal stretch at 1–17 is a signal peptide; it reads MLIQLCLTLFFLGCSIA. The region spanning 31-276 is the Peptidase S1 domain; the sequence is IVGGHSAPQG…FLPWITQQMQ (246 aa). The cysteines at positions 62 and 78 are disulfide-linked. Active-site charge relay system residues include His77 and Asp124. 3 disulfide bridges follow: Cys158/Cys234, Cys191/Cys215, and Cys224/Cys252. N-linked (GlcNAc...) asparagine glycosylation occurs at Asn197. The active-site Charge relay system is the Ser228. An N-linked (GlcNAc...) asparagine glycan is attached at Asn235.

The protein belongs to the peptidase S1 family. As to quaternary structure, homooligomer, heterodimer and heterotetramer. Able to form homo- and hetero- tetrameric structures. Heterotetramer is far more stable than the homotetramer. Expressed in embryos and placenta. Found in uterus especially in glandular epithelium during zona lysis and implantation.

The protein resides in the secreted. Functionally, involved in embryo hatching and implantation. The chain is Serine protease 29 (Prss29) from Mus musculus (Mouse).